The following is a 902-amino-acid chain: Transcription factor FPSE_08121 (902 aa).

The segment at Met-1–Arg-47 is disordered. Positions Cys-52 to Cys-81 form a DNA-binding region, zn(2)-C6 fungal-type. Disordered regions lie at residues Asn-92–Gln-189, His-208–Pro-234, Ala-258–Thr-277, and Thr-820–Thr-839. Low complexity predominate over residues Thr-120–Thr-137. The span at Glu-168 to Glu-177 shows a compositional bias: acidic residues. Composition is skewed to polar residues over residues Asn-178 to Ala-187, Gly-220 to Pro-234, Pro-262 to Thr-277, and Gly-826 to Thr-839.

Its subcellular location is the nucleus. Its function is as follows. Transcription factor; part of the Fusarium detoxification of benzoxazolinone cluster involved in the degradation of benzoxazolinones produced by the host plant. Maize, wheat, and rye produce the 2 benzoxazinone phytoanticipins 2,4-dihy-droxy-7-methoxy-1,4-benzoxazin-3-one (DIMBOA) and 2,4-dihydroxy-1,4-benzoxazin-3-one (DIBOA) that, due to their inherent instability once released, spontaneously degrade to the more stable corresponding benzoxazolinones, 6-methoxy-2-benzoxazolinone (MBOA) and 2-benzoxazolinone (BOA), respectively. FPSE_08121 positively regulates the expression of the FBD cluster gene FPSE_08120 in response to 2-aminophenol (2-AP) treatment and contributes quantitatively to benzoxazolinone tolerance. The sequence is that of Transcription factor FPSE_08121 from Fusarium pseudograminearum (strain CS3096) (Wheat and barley crown-rot fungus).